The sequence spans 282 residues: Small ribosomal subunit protein uS3 (282 aa).

The KH type-2 domain maps to isoleucine 43–lysine 111. The tract at residues glutamine 218–alanine 282 is disordered. The span at proline 230–glutamate 262 shows a compositional bias: basic and acidic residues. The span at asparagine 263–alanine 276 shows a compositional bias: low complexity.

Belongs to the universal ribosomal protein uS3 family. In terms of assembly, part of the 30S ribosomal subunit. Forms a tight complex with proteins S10 and S14.

In terms of biological role, binds the lower part of the 30S subunit head. Binds mRNA in the 70S ribosome, positioning it for translation. This chain is Small ribosomal subunit protein uS3, found in Renibacterium salmoninarum (strain ATCC 33209 / DSM 20767 / JCM 11484 / NBRC 15589 / NCIMB 2235).